Consider the following 1253-residue polypeptide: Cytoplasmic FMR1-interacting protein 2 (1253 aa).

The protein belongs to the CYFIP family.

Its subcellular location is the cytoplasm. Its function is as follows. Involved in T-cell adhesion and p53-dependent induction of apoptosis. Does not bind RNA. This chain is Cytoplasmic FMR1-interacting protein 2 (cyfip2), found in Xenopus laevis (African clawed frog).